Here is a 130-residue protein sequence, read N- to C-terminus: uncharacterized protein (130 aa).

Positions isoleucine 19–phenylalanine 73 constitute an HTH cro/C1-type domain. Residues arginine 30 to lysine 49 constitute a DNA-binding region (H-T-H motif).

This is an uncharacterized protein from Rickettsia prowazekii (strain Madrid E).